Here is an 81-residue protein sequence, read N- to C-terminus: U10-myrmicitoxin-Mri1b (81 aa).

Positions 1–26 are cleaved as a signal peptide; it reads MRLSYISLTLAIIFVMAIVHAPETEA. Residues 27–52 constitute a propeptide that is removed on maturation; the sequence is KAYPEADAVAEAIAVGEADAVGVADP. V80 carries the post-translational modification Valine amide.

The protein belongs to the formicidae venom precursor-01 superfamily. As to expression, expressed by the venom gland.

The protein localises to the secreted. Induces paralysis after injection into blowflies (L.caesar), and then death within 24 hours. May have antimicrobial properties, like most ant linear peptides. The protein is U10-myrmicitoxin-Mri1b of Manica rubida (European giant red ant).